The chain runs to 131 residues: Sec-independent protein translocase protein TatB (131 aa).

The chain crosses the membrane as a helical span at residues Phe2–Gly22. Residues Leu86–Arg95 show a composition bias toward polar residues. Residues Leu86–Gly131 form a disordered region. Positions Thr115–Gly131 are enriched in low complexity.

This sequence belongs to the TatB family. As to quaternary structure, the Tat system comprises two distinct complexes: a TatABC complex, containing multiple copies of TatA, TatB and TatC subunits, and a separate TatA complex, containing only TatA subunits. Substrates initially bind to the TatABC complex, which probably triggers association of the separate TatA complex to form the active translocon.

The protein resides in the cell inner membrane. Its function is as follows. Part of the twin-arginine translocation (Tat) system that transports large folded proteins containing a characteristic twin-arginine motif in their signal peptide across membranes. Together with TatC, TatB is part of a receptor directly interacting with Tat signal peptides. TatB may form an oligomeric binding site that transiently accommodates folded Tat precursor proteins before their translocation. This chain is Sec-independent protein translocase protein TatB, found in Shewanella halifaxensis (strain HAW-EB4).